Reading from the N-terminus, the 73-residue chain is Large ribosomal subunit protein bL27c (73 aa).

The protein belongs to the bacterial ribosomal protein bL27 family.

The protein resides in the plastid. It localises to the chloroplast. The protein is Large ribosomal subunit protein bL27c (rpl27) of Haptolina hirta (Plankton alga).